The following is a 249-amino-acid chain: 1-(5-phosphoribosyl)-5-[(5-phosphoribosylamino)methylideneamino] imidazole-4-carboxamide isomerase (249 aa).

Asp11 functions as the Proton acceptor in the catalytic mechanism. Asp133 functions as the Proton donor in the catalytic mechanism.

It belongs to the HisA/HisF family.

It is found in the cytoplasm. The enzyme catalyses 1-(5-phospho-beta-D-ribosyl)-5-[(5-phospho-beta-D-ribosylamino)methylideneamino]imidazole-4-carboxamide = 5-[(5-phospho-1-deoxy-D-ribulos-1-ylimino)methylamino]-1-(5-phospho-beta-D-ribosyl)imidazole-4-carboxamide. Its pathway is amino-acid biosynthesis; L-histidine biosynthesis; L-histidine from 5-phospho-alpha-D-ribose 1-diphosphate: step 4/9. The protein is 1-(5-phosphoribosyl)-5-[(5-phosphoribosylamino)methylideneamino] imidazole-4-carboxamide isomerase of Mannheimia succiniciproducens (strain KCTC 0769BP / MBEL55E).